Reading from the N-terminus, the 261-residue chain is Succinate dehydrogenase iron-sulfur subunit (261 aa).

The 2Fe-2S ferredoxin-type domain maps to 28 to 119 (RKVKVYRYDP…DIKIYPLPHM (92 aa)). [2Fe-2S] cluster-binding residues include Cys80, Cys85, and Cys100. Residues 161–191 (DREKLDGLYECILCACCSTSCPSYWWNGDKY) form the 4Fe-4S ferredoxin-type domain. Cys171, Cys174, and Cys177 together coordinate [4Fe-4S] cluster. A [3Fe-4S] cluster-binding site is contributed by Cys181. Trp186 provides a ligand contact to a ubiquinone. [3Fe-4S] cluster-binding residues include Cys228 and Cys234. Cys238 provides a ligand contact to [4Fe-4S] cluster.

This sequence belongs to the succinate dehydrogenase/fumarate reductase iron-sulfur protein family. In terms of assembly, part of an enzyme complex containing four subunits: a flavoprotein, an iron-sulfur, cytochrome b-556, and a hydrophobic anchor protein. It depends on [2Fe-2S] cluster as a cofactor. Requires [3Fe-4S] cluster as cofactor. The cofactor is [4Fe-4S] cluster.

The catalysed reaction is a quinone + succinate = fumarate + a quinol. Its pathway is carbohydrate metabolism; tricarboxylic acid cycle; fumarate from succinate (bacterial route): step 1/1. This is Succinate dehydrogenase iron-sulfur subunit (sdhB) from Rickettsia prowazekii (strain Madrid E).